The chain runs to 335 residues: Trans-3-hydroxy-L-proline dehydratase (335 aa).

C91 (proton acceptor) is an active-site residue. Substrate contacts are provided by residues 92–93 and 256–257; these read GH and GS.

It belongs to the proline racemase family. In terms of assembly, homodimer.

It catalyses the reaction trans-3-hydroxy-L-proline = 1-pyrroline-2-carboxylate + H2O. It functions in the pathway amino-acid degradation. In terms of biological role, catalyzes the dehydration of trans-3-hydroxy-L-proline (t3LHyp) to Delta(1)-pyrroline-2-carboxylate (Pyr2C). Together with LhpI, is involved in a t3LHyp degradation pathway to L-proline, which allows A.brasilense to grow on t3LHyp as a sole carbon source. This Azospirillum brasilense protein is Trans-3-hydroxy-L-proline dehydratase.